Here is a 450-residue protein sequence, read N- to C-terminus: tRNA modification GTPase MnmE (450 aa).

(6S)-5-formyl-5,6,7,8-tetrahydrofolate is bound by residues Lys21, Glu78, and Lys117. Positions 213-376 constitute a TrmE-type G domain; that stretch reads GHALSIVGKP…LSQKISAFFP (164 aa). Residue Asn223 coordinates K(+). GTP-binding positions include 223–228, 242–248, and 267–270; these read NAGKSS, SDIKGTT, and DTAG. Ser227 is a Mg(2+) binding site. Residues Ser242, Ile244, and Thr247 each contribute to the K(+) site. Thr248 contributes to the Mg(2+) binding site. Lys450 contributes to the (6S)-5-formyl-5,6,7,8-tetrahydrofolate binding site.

The protein belongs to the TRAFAC class TrmE-Era-EngA-EngB-Septin-like GTPase superfamily. TrmE GTPase family. Homodimer. Heterotetramer of two MnmE and two MnmG subunits. K(+) serves as cofactor.

The protein resides in the cytoplasm. Its function is as follows. Exhibits a very high intrinsic GTPase hydrolysis rate. Involved in the addition of a carboxymethylaminomethyl (cmnm) group at the wobble position (U34) of certain tRNAs, forming tRNA-cmnm(5)s(2)U34. The chain is tRNA modification GTPase MnmE from Helicobacter pylori (strain Shi470).